We begin with the raw amino-acid sequence, 180 residues long: Inner membrane-spanning protein YciB (180 aa).

The next 5 helical transmembrane spans lie at 25-45 (QNAT…CYII), 49-69 (VSKL…ITLI), 76-96 (IKIK…MSGI), 118-138 (ITLS…NEIV), and 150-170 (FKVF…LPLL).

The protein belongs to the YciB family.

Its subcellular location is the cell inner membrane. Plays a role in cell envelope biogenesis, maintenance of cell envelope integrity and membrane homeostasis. The chain is Inner membrane-spanning protein YciB from Rickettsia akari (strain Hartford).